The chain runs to 415 residues: MHPVLRQMRPPPQQRQEQEQRQTCRAPSPPPTASGGATSAVDAAADGDYEPPRRRARHYLDLEEGEGLARLGAPSPERYPRVQLKRDTREAYVPRQNLFRDREGEEPEEMRDRKFHAGRELRHGLNRERLLREEDFEPDARTGISPARAHVAAADLVTAYEQTVNQEINFQKSFNNHVRTLVAREEVAIGLMHLWDFVSALEQNPNSKPLMAQLFLIVQHSRDNEAFRDALLNIVEPEGRWLLDLINILQSIVVQERSLSLADKVAAINYSMLSLGKFYARKIYHTPYVPIDKEVKIEGFYMRMALKVLTLSDDLGVYRNERIHKAVSVSRRRELSDRELMHSLQRALAGTGSGDREAESYFDAGADLRWAPSRRALEAAGAGPGLAVAPARAGNVGGVEEYDEDDEYEPEDGEY.

Residues 1–55 (MHPVLRQMRPPPQQRQEQEQRQTCRAPSPPPTASGGATSAVDAAADGDYEPPRRR) are disordered. The segment at 1–173 (MHPVLRQMRP…VNQEINFQKS (173 aa)) is interaction with packaging protein 1. A phosphoserine; by host mark is found at S75 and S360. Positions 381 to 394 (GAGPGLAVAPARAG) are enriched in low complexity. The segment at 381–415 (GAGPGLAVAPARAGNVGGVEEYDEDDEYEPEDGEY) is disordered. Positions 400 to 415 (EEYDEDDEYEPEDGEY) are enriched in acidic residues.

The protein belongs to the adenoviridae packaging protein 3 family. In terms of assembly, part of the genome packaging complex composed of packaging proteins 1, 2 and 3; this complex specifically binds to the packaging sequence on the left end of viral genomic DNA and performs packaging of the viral genome. Interacts with hexon-linking protein IIIa; this interaction is required to promote correct genome packaging. Cleaved at different sites by the viral protease during virion maturation.

It is found in the host nucleus. Its function is as follows. Involved in viral genome packaging through its interaction with packaging proteins 1 and 2. After proteolytic cleavage by adenovirus protease, L1 52/55k protein is removed from the capsid during viral maturation. The chain is Packaging protein 3 from Homo sapiens (Human).